We begin with the raw amino-acid sequence, 289 residues long: uncharacterized protein (289 aa).

This is an uncharacterized protein from Escherichia coli (strain K12).